The sequence spans 247 residues: 3-oxoacyl-[acyl-carrier-protein] reductase MabA (247 aa).

NADP(+)-binding positions include 25–27, Arg-47, 61–62, Gly-90, Tyr-153, Lys-157, Ile-186, and Arg-197; these read RGI and DV. The active-site Proton acceptor is Tyr-153.

This sequence belongs to the short-chain dehydrogenases/reductases (SDR) family. As to quaternary structure, homotetramer.

It is found in the secreted. It localises to the cell wall. The catalysed reaction is a (3R)-hydroxyacyl-[ACP] + NADP(+) = a 3-oxoacyl-[ACP] + NADPH + H(+). The protein operates within lipid metabolism; mycolic acid biosynthesis. In terms of biological role, part of the mycobacterial fatty acid elongation system FAS-II, which is involved in mycolic acid biosynthesis. Catalyzes the NADPH-dependent reduction of beta-ketoacyl derivatives, the second step of the FAS-II elongation cycle. This is 3-oxoacyl-[acyl-carrier-protein] reductase MabA from Mycobacterium bovis (strain ATCC BAA-935 / AF2122/97).